Reading from the N-terminus, the 852-residue chain is Probable nitrite reductase-hydroxylamine oxidoreductase fusion protein (852 aa).

Positions 1 to 27 are cleaved as a signal peptide; that stretch reads MLNKSAALVPVVLAFLFLFLCFQCLYA. The segment at 28–327 is nitrite reductase domain; sequence DIRCLTGKDG…DEGRKTLSAP (300 aa). Plastocyanin-like domains follow at residues 72 to 169 and 217 to 307; these read VPGP…IVEP and GETW…VEEG. Cu cation is bound by residues histidine 102 and histidine 145. The segment at 328–827 is hydroxylamine oxidoreductase domain; that stretch reads GQDRQPPTLE…ISWWWGTAQG (500 aa). Positions 406, 409, 410, 426, 463, 466, 467, 471, 483, 486, 487, 505, 537, 543, 546, 547, 550, 563, 566, 567, 614, 617, 618, 686, 689, 690, and 813 each coordinate heme.

This sequence in the N-terminal section; belongs to the multicopper oxidase family. The cofactor is Cu cation. Requires heme as cofactor.

Its subcellular location is the encapsulin nanocompartment. The catalysed reaction is hydroxylamine + 4 Fe(III)-[cytochrome c] + H2O = 4 Fe(II)-[cytochrome c] + nitrite + 5 H(+). The enzyme catalyses nitric oxide + Fe(III)-[cytochrome c] + H2O = Fe(II)-[cytochrome c] + nitrite + 2 H(+). Its function is as follows. A nitrite reductase-hydroxylamine oxidoreductase protein that probably functions in the type 1 encapsulin nanocompartment. Probably involved in reductive catalysis. Targeted to the encapsulin nanocompartment by association with the diheme domain of the encapsulin shell protein (AC Q1Q6L7). Catalyzes the reduction of nitrite to nitric oxide (NO). Catalyzes the oxidation of hydroxylamine to nitrite. This Kuenenia stuttgartiensis protein is Probable nitrite reductase-hydroxylamine oxidoreductase fusion protein.